A 288-amino-acid chain; its full sequence is Small ribosomal subunit protein uS2 (288 aa).

It belongs to the universal ribosomal protein uS2 family. As to quaternary structure, component of the small ribosomal subunit. Mature ribosomes consist of a small (40S) and a large (60S) subunit. The 40S subunit contains about 33 different proteins and 1 molecule of RNA (18S). The 60S subunit contains about 49 different proteins and 3 molecules of RNA (28S, 5.8S and 5S). Interacts with ribosomal protein S21.

Its subcellular location is the cytoplasm. Required for the assembly and/or stability of the 40S ribosomal subunit. Required for the processing of the 20S rRNA-precursor to mature 18S rRNA in a late step of the maturation of 40S ribosomal subunits. The sequence is that of Small ribosomal subunit protein uS2 from Aedes aegypti (Yellowfever mosquito).